The chain runs to 291 residues: MSSPRERRPASQAPRLSRRPPAHQTSRSSPDTTAPTGSGLSNRFVNDNGIVTDTTASGTNCPPPPRAAARRASSPGESPQLVIFDLDGTLTDSARGIVSSFRHALNHIGAPVPEGDLATHIVGPPMHETLRAMGLGESAEEAIVAYRADYSARGWAMNSLFDGIGPLLADLRTAGVRLAVATSKAEPTARRILRHFGIEQHFEVIAGASTDGSRGSKVDVLAHALAQLRPLPERLVMVGDRSHDVDGAAAHGIDTVVVGWGYGRADFIDKTSTTVVTHAATIDELREALGV.

Positions 1–79 are disordered; that stretch reads MSSPRERRPA…RRASSPGESP (79 aa). Positions 23–60 are enriched in polar residues; the sequence is HQTSRSSPDTTAPTGSGLSNRFVNDNGIVTDTTASGTN. At tyrosine 262 the chain carries Phosphotyrosine.

Belongs to the HAD-like hydrolase superfamily. CbbY/CbbZ/Gph/YieH family. In terms of assembly, interacts with PtpA. Autophosphorylated.

The catalysed reaction is L-tyrosyl-[protein] + ATP = O-phospho-L-tyrosyl-[protein] + ADP + H(+). In terms of biological role, required for growth within macrophages. Catalyzes the phosphorylation of PtpA on the tyrosine residues at positions 128 and 129, thereby increasing PtpA phosphatase activity and promoting pathogenicity. The polypeptide is Tyrosine-protein kinase PtkA (Mycobacterium bovis (strain ATCC BAA-935 / AF2122/97)).